A 433-amino-acid chain; its full sequence is MAIQTTTGLAARLVAKRATFPASRRNFSASRSALKEIQEAYILSGARTPTAKFNGSFVSVSAPELGAVAIKSAVSKSGVPVEKITDVYMGNVLQGAVGQAPARQASMFAGLSPTVESMTVNKVCASGLKAVALAAQNIQLGLAEAQVAGGMENMSRVPYYLPRSTQLPPFGEIKLQDGLIQDGLWDVYNQFHMGICAEKTAKKYEISREEQDQYAIQSYQRAQAAWKENKFAEEIAPVTVKGKKGETVVERDEGYENLRIDKMATLKPAFLRDGTGTVTAGNASTMNDGASALVLGSKAIAREFAQGNRALARIVSTADAAIDPVDFPVAPAKAVPIALERAGITKDQVAVWEFNEAFAAVIKANEKILGLQNARVNPLGGAISLGHALGSSGSRILVTLLHQLQPGEYGVAAICNGGGAATAMVVQKLDRVD.

The transit peptide at 1–34 (MAIQTTTGLAARLVAKRATFPASRRNFSASRSAL) directs the protein to the mitochondrion. Cys-124 (acyl-thioester intermediate) is an active-site residue. Tyr-219 is a binding site for K(+). Residues Asn-229 and Lys-262 each coordinate CoA. Ala-280 provides a ligand contact to K(+). Ser-284 is a binding site for CoA. Catalysis depends on proton acceptor residues His-387 and Cys-415. Asn-416 lines the chloride pocket.

Belongs to the thiolase-like superfamily. Thiolase family. In terms of assembly, homotetramer. Requires K(+) as cofactor.

The protein resides in the mitochondrion. The catalysed reaction is 2 acetyl-CoA = acetoacetyl-CoA + CoA. The protein operates within metabolic intermediate biosynthesis; (R)-mevalonate biosynthesis; (R)-mevalonate from acetyl-CoA: step 1/3. Its function is as follows. Mitochondrial acetyl-CoA acetyltransferase that catalyzes both the formation and degradation of acetoacetyl-CoA. Has no overlapping function with erg10B and seems not to be involved in ergosterol biosynthesis. Plays an important role in growth, morphogenesis and maintaining mitochondrial function including the response to oxidative stresses. This is Acetyl-CoA acetyltransferase erg10A, mitochondrial from Aspergillus fumigatus (strain ATCC MYA-4609 / CBS 101355 / FGSC A1100 / Af293) (Neosartorya fumigata).